A 228-amino-acid chain; its full sequence is A-type ATP synthase subunit D (228 aa).

The segment covering 205 to 214 (KKEEEEKAEA) has biased composition (basic and acidic residues). The segment at 205–228 (KKEEEEKAEAAAEAAAVEDPEPAD) is disordered.

The protein belongs to the V-ATPase D subunit family. As to quaternary structure, has multiple subunits with at least A(3), B(3), C, D, E, F, H, I and proteolipid K(x).

It localises to the cell membrane. Component of the A-type ATP synthase that produces ATP from ADP in the presence of a proton gradient across the membrane. In Halorubrum lacusprofundi (strain ATCC 49239 / DSM 5036 / JCM 8891 / ACAM 34), this protein is A-type ATP synthase subunit D.